Reading from the N-terminus, the 249-residue chain is Methyl-coenzyme M reductase I subunit gamma (249 aa).

Coenzyme M is bound at residue R120.

It belongs to the methyl-coenzyme M reductase gamma subunit family. In terms of assembly, MCR is a hexamer of two alpha, two beta, and two gamma chains, forming a dimer of heterotrimers. The cofactor is coenzyme F430.

The protein localises to the cytoplasm. It catalyses the reaction coenzyme B + methyl-coenzyme M = methane + coenzyme M-coenzyme B heterodisulfide. It participates in one-carbon metabolism; methyl-coenzyme M reduction; methane from methyl-coenzyme M: step 1/1. Its activity is regulated as follows. Methyl-coenzyme M reductase activity is inhibited by 3-nitrooxypropanol (3-NOP) in vitro and in vivo, by oxidation of its active site Ni(I), which stops both growth and methanogenesis. Is also inhibited by the reaction product CoM-S-S-CoB. Component of the methyl-coenzyme M reductase (MCR) I that catalyzes the reductive cleavage of methyl-coenzyme M (CoM-S-CH3 or 2-(methylthio)ethanesulfonate) using coenzyme B (CoB or 7-mercaptoheptanoylthreonine phosphate) as reductant which results in the production of methane and the mixed heterodisulfide of CoB and CoM (CoM-S-S-CoB). This is the final step in methanogenesis. Neither N-6-mercaptohexanoylthreonine phosphate (H-S-HxoTP) nor N-8-mercaptooctanoylthreonine phosphate (H-SOcoTP) nor any other thiol compound such as CoA or CoM can substitute for CoB as the electron donor. In Methanothermobacter marburgensis (strain ATCC BAA-927 / DSM 2133 / JCM 14651 / NBRC 100331 / OCM 82 / Marburg) (Methanobacterium thermoautotrophicum), this protein is Methyl-coenzyme M reductase I subunit gamma (mcrG).